Here is a 109-residue protein sequence, read N- to C-terminus: Cell division protein ZapA (109 aa).

Positions 21–97 form a coiled coil; the sequence is PEQQEALNQA…QTIEQALVEQ (77 aa).

Belongs to the ZapA family. Type 1 subfamily. Homodimer. Interacts with FtsZ.

It localises to the cytoplasm. Its function is as follows. Activator of cell division through the inhibition of FtsZ GTPase activity, therefore promoting FtsZ assembly into bundles of protofilaments necessary for the formation of the division Z ring. It is recruited early at mid-cell but it is not essential for cell division. The chain is Cell division protein ZapA from Sodalis glossinidius (strain morsitans).